The primary structure comprises 392 residues: ATP phosphoribosyltransferase regulatory subunit (392 aa).

Belongs to the class-II aminoacyl-tRNA synthetase family. HisZ subfamily. Heteromultimer composed of HisG and HisZ subunits.

It localises to the cytoplasm. It functions in the pathway amino-acid biosynthesis; L-histidine biosynthesis; L-histidine from 5-phospho-alpha-D-ribose 1-diphosphate: step 1/9. In terms of biological role, required for the first step of histidine biosynthesis. May allow the feedback regulation of ATP phosphoribosyltransferase activity by histidine. This chain is ATP phosphoribosyltransferase regulatory subunit, found in Synechococcus sp. (strain CC9902).